Consider the following 955-residue polypeptide: E3 ubiquitin-protein ligase MIB2 (955 aa).

At Met1 the chain carries N-acetylmethionine. The MIB/HERC2 1 domain maps to 1-80 (MDPDPQAGVQ…AHDLLLYDNA (80 aa)). Residues 86-138 (HPNIICDCCKKHGLRGMRWKCRVCLDYDLCTQCYMHNKHELAHAFDRYETAHS) form a ZZ-type zinc finger. The Zn(2+) site is built by Cys91, Cys94, Cys106, Cys109, Cys115, Cys118, His124, and His128. Residues 149-227 (LPRIPLRGIF…KVDLKCVGEA (79 aa)) enclose the MIB/HERC2 2 domain. Ser251 carries the phosphoserine modification. ANK repeat units lie at residues 464-493 (QGRTALQVAAYLGQVELIRLLLQARAGVDL), 497-526 (EGNTALHYAALGNQPEATRVLLSAGCRADA), 530-559 (TQSTALHVAVQRGFLEVVRALCERGCDVNL), 563-595 (HSDTPLHSAISAGTGASGIVEVLTEVPNIDVTA), 599-628 (QGFTLLHHASLKGHALAVRKILARARQLVD), 633-663 (DGFTALHLAALNNHREVAQILIREGRCDVNV), 667-696 (KLQSPLHLAVQQAHVGLVPLLVDAGCSVNA), 700-728 (EGDTALHVALQRHQLLPLVADGAGGDPGP), and 769-798 (RGRSPLDLAAEGRVLKALQGCAQRFRERQA). 2 RING-type zinc fingers span residues 832–867 (CLVCSELALLVLFSPCQHRTVCEECARRMKKCIRCQ) and 911–944 (CPICIDSHIRLVFQCGHGACAPCGSALSACPICR).

As to quaternary structure, interacts with actin monomer. Post-translationally, ubiquitinated. Possibly via autoubiquitination. As to expression, expressed in skeletal muscle, and to a lesser extent in heart, brain and kidney.

It localises to the cytoplasm. Its subcellular location is the endosome. It carries out the reaction S-ubiquitinyl-[E2 ubiquitin-conjugating enzyme]-L-cysteine + [acceptor protein]-L-lysine = [E2 ubiquitin-conjugating enzyme]-L-cysteine + N(6)-ubiquitinyl-[acceptor protein]-L-lysine.. Its pathway is protein modification; protein ubiquitination. In terms of biological role, E3 ubiquitin-protein ligase that mediates ubiquitination of Delta receptors, which act as ligands of Notch proteins. Positively regulates the Delta-mediated Notch signaling by ubiquitinating the intracellular domain of Delta, leading to endocytosis of Delta receptors. This is E3 ubiquitin-protein ligase MIB2 from Homo sapiens (Human).